The primary structure comprises 84 residues: Small ribosomal subunit protein bS20 (84 aa).

Belongs to the bacterial ribosomal protein bS20 family.

Binds directly to 16S ribosomal RNA. In Azobacteroides pseudotrichonymphae genomovar. CFP2, this protein is Small ribosomal subunit protein bS20.